The primary structure comprises 239 residues: 4-hydroxy-tetrahydrodipicolinate reductase (239 aa).

NAD(+) is bound by residues 9–14, 78–80, and 104–107; these read GINGKI, GTT, and APNF. His-134 serves as the catalytic Proton donor/acceptor. His-135 serves as a coordination point for (S)-2,3,4,5-tetrahydrodipicolinate. Lys-138 functions as the Proton donor in the catalytic mechanism. 144 to 145 provides a ligand contact to (S)-2,3,4,5-tetrahydrodipicolinate; it reads GT.

It belongs to the DapB family.

It is found in the cytoplasm. The enzyme catalyses (S)-2,3,4,5-tetrahydrodipicolinate + NAD(+) + H2O = (2S,4S)-4-hydroxy-2,3,4,5-tetrahydrodipicolinate + NADH + H(+). It carries out the reaction (S)-2,3,4,5-tetrahydrodipicolinate + NADP(+) + H2O = (2S,4S)-4-hydroxy-2,3,4,5-tetrahydrodipicolinate + NADPH + H(+). It participates in amino-acid biosynthesis; L-lysine biosynthesis via DAP pathway; (S)-tetrahydrodipicolinate from L-aspartate: step 4/4. Functionally, catalyzes the conversion of 4-hydroxy-tetrahydrodipicolinate (HTPA) to tetrahydrodipicolinate. In Coxiella burnetii (strain CbuG_Q212) (Coxiella burnetii (strain Q212)), this protein is 4-hydroxy-tetrahydrodipicolinate reductase.